A 310-amino-acid polypeptide reads, in one-letter code: Putative HTH-type transcriptional regulatory protein YN1551_1579 (310 aa).

The 56-residue stretch at 125–180 (LKHKREEMGYSIGDVAKFLGVSRKAIYDYEKGDSDVSLEVAEKLIDLFGDDIIGDV) folds into the HTH cro/C1-type domain. Positions 136–155 (IGDVAKFLGVSRKAIYDYEK) form a DNA-binding region, H-T-H motif.

The sequence is that of Putative HTH-type transcriptional regulatory protein YN1551_1579 from Saccharolobus islandicus (strain Y.N.15.51 / Yellowstone #2) (Sulfolobus islandicus).